The chain runs to 138 residues: Large ribosomal subunit protein uL16 (138 aa).

It belongs to the universal ribosomal protein uL16 family. Part of the 50S ribosomal subunit.

In terms of biological role, binds 23S rRNA and is also seen to make contacts with the A and possibly P site tRNAs. The protein is Large ribosomal subunit protein uL16 of Chlamydia felis (strain Fe/C-56) (Chlamydophila felis).